We begin with the raw amino-acid sequence, 1440 residues long: Bridge-like lipid transfer protein family member 3A (1440 aa).

One can recognise a Chorein N-terminal domain in the interval 3–95; sequence GIIKKQILKH…KVEVEMKTCE (93 aa). 3 disordered regions span residues 267–307, 430–456, and 751–780; these read SAHQ…NSSS, ADSL…FQPP, and KPSA…TEHD. The span at 287-307 shows a compositional bias: low complexity; that stretch reads SAQQSWAQAFGGSQGNSNSSS. Phosphoserine occurs at positions 444, 446, 755, and 758. Residues 837 to 860 adopt a coiled-coil conformation; sequence ALLRLKEVLQRLQEQLTKDTESMT. Residues 891–1008 are disordered; that stretch reads VDADSAGSDS…ETAVNGQGEL (118 aa). Over residues 911-920 the composition is skewed to basic and acidic residues; it reads SEDRELKSDA. Low complexity predominate over residues 985-995; the sequence is ASSSPAALKPP. 3 positions are modified to phosphoserine: serine 988, serine 1103, and serine 1106. A disordered region spans residues 1106–1180; it reads SFDGVSLDSS…SPAANSSVSP (75 aa). Positions 1134 to 1150 are enriched in low complexity; sequence LLESESGPESVPPGSLS. A compositionally biased stretch (polar residues) spans 1151–1180; that stretch reads NVSDNAGVQGSPLVNNYGQGSPAANSSVSP. Residues 1401–1435 adopt a coiled-coil conformation; it reads KELPILQKELIETKQALANANQDKEKLLQEIRKYN.

Homodimer (Potential). Interacts with UHRF1.

It is found in the late endosome. Its function is as follows. Tube-forming lipid transport protein which probably mediates the transfer of lipids between membranes at organelle contact sites. May be involved in the retrograde traffic of vesicle clusters in the endocytic pathway to the Golgi complex. The sequence is that of Bridge-like lipid transfer protein family member 3A from Homo sapiens (Human).